Reading from the N-terminus, the 440-residue chain is KH domain-containing protein 3 (440 aa).

Residues 1-39 (MASLKRFQTLVPLDHKQGTLFEIIGEPKLPKWFHVECLE) form an involved in RNA binding region. The region spanning 40–118 (DPKRLYVEPR…CRMKLMEIEA (79 aa)) is the KH; atypical domain. Positions 132–201 (KAATQPAPVK…EVREAATEQA (70 aa)) are disordered. Ser-151 carries the post-translational modification Phosphoserine; by ATR. 2 positions are modified to phosphothreonine: Thr-274 and Thr-286. Positions 341 to 440 (VREAATQLSP…RDAWESFIIL (100 aa)) are required for interaction with NUMA1 and regulation of apoptosis in response to DNA damage. Ser-349 bears the Phosphoserine mark.

This sequence belongs to the KHDC1 family. As to quaternary structure, component of the subcortical maternal complex (SCMC), at least composed of NLRP5, KHDC3, OOEP, and TLE6. Within the complex, interacts with NLRP5, OOEP and TLE6. The SCMC may facilitate translocation of its components between the nuclear and cytoplasmic compartments. Forms a scaffold complex with OOEP/FLOPED, and interacts with BLM and TRIM25 at DNA replication forks. Interacts with PARP1; the interaction is increased following the formation of DNA double-strand breaks. Interacts (via C-terminus) with NUMA1. Post-translationally, phosphorylation at Ser-151 is required to promote stalled fork restart. In terms of tissue distribution, detected in ovary, but not in testis or somatic tissues. In the ovary, expressed in growing oocytes.

It is found in the cytoplasm. The protein resides in the cell cortex. It localises to the nucleus. The protein localises to the mitochondrion. Its subcellular location is the cytoskeleton. It is found in the microtubule organizing center. The protein resides in the centrosome. It localises to the chromosome. Its function is as follows. Component of the subcortical maternal complex (SCMC), a multiprotein complex that plays a key role in early embryonic development. The SCMC complex is a structural constituent of cytoplasmic lattices, which consist in fibrous structures found in the cytoplasm of oocytes and preimplantation embryos. They are required to store maternal proteins critical for embryonic development, such as proteins that control epigenetic reprogramming of the preimplantation embryo, and prevent their degradation or activation. KHDC3 ensures proper spindle assembly by regulating the localization of AURKA via RHOA signaling and of PLK1 via a RHOA-independent process. Required for the localization of MAD2L1 to kinetochores to enable spindle assembly checkpoint function. As part of the OOEP-KHDC3 scaffold, recruits BLM and TRIM25 to DNA replication forks, thereby promoting the ubiquitination of BLM by TRIM25, enhancing BLM retainment at replication forks and therefore promoting stalled replication fork restart. Regulates homologous recombination-mediated DNA repair via recruitment of RAD51 to sites of DNA double-strand breaks, and sustainment of PARP1 activity, which in turn modulates downstream ATM or ATR activation. Activation of ATM or ATR in response to DNA double-strand breaks may be cell-type specific. Its role in DNA double-strand break repair is independent of its role in restarting stalled replication forks. Promotes neural stem cell neurogenesis and neuronal differentiation in the hippocampus. May regulate normal development of learning, memory and anxiety. Capable of binding RNA. This is KH domain-containing protein 3 from Mus musculus (Mouse).